A 173-amino-acid polypeptide reads, in one-letter code: Protein SUGARY ENHANCER 1 (173 aa).

Residues 1–31 (MIRPAPWVGAGHRGRGGEAGACTESLGSESG) are disordered.

It belongs to the fantastic four family.

Functionally, involved in starch metabolism in endosperm. Acts as a modifier of SUGARY1 (SU1), an isoamylase starch-debranching enzyme involved in amylopectin biosynthesis in endosperm. The sequence is that of Protein SUGARY ENHANCER 1 from Zea mays (Maize).